The following is a 432-amino-acid chain: Crenactin (432 aa).

ATP is bound by residues 20 to 24 (TSYVK), 182 to 184 (GGH), 235 to 239 (EVVKR), 354 to 358 (GAFSW), and Q399.

Belongs to the actin family. Monomer. The crenactin monomers polymerize into right-handed helical filaments, with 8 subunits per complete turn of the helix. Forms single-stranded filaments under high salt concentrations and double-stranded filaments under low salt concentrations. Interacts with arcadin-1 and arcadin-2.

Its subcellular location is the cytoplasm. It is found in the cytoskeleton. The catalysed reaction is ATP + H2O = ADP + phosphate + H(+). Its activity is regulated as follows. Crenactin polymerization is inhibited by interaction with arcadin-2. Also significantly inhibited by elevated antibiotic A22 concentrations. Functionally, forms the backbone of an actin-like archaeal cytoskeleton, which is involved in cell shape determination. Has ATPase activity. Shows highest activity towards ATP or GTP as nucleotide, and only residual activity on UTP, CTP and dNTPs. The chain is Crenactin from Pyrobaculum calidifontis (strain DSM 21063 / JCM 11548 / VA1).